A 455-amino-acid polypeptide reads, in one-letter code: Protein indeterminate-domain 7 (455 aa).

The interval Met-1–Gln-52 is disordered. Positions Met-17–Gln-49 are enriched in polar residues. Ser-82 is modified (phosphoserine). 2 C2H2-type zinc fingers span residues Phe-92–His-114 and Tyr-134–His-164. The Nuclear localization signal signature appears at Ile-156–Lys-163. The C2H2-type 2; degenerate zinc finger occupies Trp-169–Gly-192. The Zn(2+) site is built by Cys-171, Cys-174, His-187, Cys-191, Cys-198, Cys-200, His-213, and Cys-217. The segment at Tyr-196–Ala-219 adopts a CCHC-type 2; atypical zinc-finger fold. The interval Arg-206 to Asp-218 is SHR-binding. The segment at Gln-235–Ser-351 is disordered. Composition is skewed to low complexity over residues Gln-248–Asn-265 and Ser-288–Asn-299.

The protein localises to the nucleus. Probable transcription factor. The polypeptide is Protein indeterminate-domain 7 (Arabidopsis thaliana (Mouse-ear cress)).